The following is a 147-amino-acid chain: uncharacterized protein (147 aa).

The protein belongs to the RTX toxin acyltransferase family.

This is an uncharacterized protein from Synechocystis sp. (strain ATCC 27184 / PCC 6803 / Kazusa).